The chain runs to 419 residues: AT-rich binding protein (419 aa).

The segment at 29 to 52 (IVCHTCQEELQTQDAFWKHIQDEH) adopts a C2H2-type 1 zinc-finger fold. The segment at 121–179 (LHEAQHQQQQQQQQHQQQQQQQQHQQQQQHQHHQHQQQQQHLHQQQQQQQQQQRDAAKE) is disordered. Composition is skewed to low complexity over residues 126-149 (HQQQ…QQQQ) and 156-173 (QQQQ…QQQQ). 2 C2H2-type zinc fingers span residues 352–376 (YVCD…RVVH) and 382–405 (FNCD…KKKH).

It localises to the nucleus. Its function is as follows. May be a transcription factor for genes having (A+T) stretches in their promoter and/or enhancer regions. Binds to AT rich DNA. The sequence is that of AT-rich binding protein from Drosophila grimshawi (Hawaiian fruit fly).